A 718-amino-acid polypeptide reads, in one-letter code: Coiled-coil domain-containing protein 157 (718 aa).

Residues 300–603 (LRAQLEDAEG…LTKIREVAQQ (304 aa)) adopt a coiled-coil conformation. The segment covering 469–482 (RGSLDEAEAQRSEL) has biased composition (basic and acidic residues). Disordered regions lie at residues 469-490 (RGSL…QSLQ) and 617-690 (PPYK…TQNP). The span at 639 to 659 (TGRRQSPGSRTSSTGRTHPGG) shows a compositional bias: low complexity.

In Mus musculus (Mouse), this protein is Coiled-coil domain-containing protein 157 (Ccdc157).